A 956-amino-acid polypeptide reads, in one-letter code: Run domain Beclin-1-interacting and cysteine-rich domain-containing protein (956 aa).

In terms of domain architecture, RUN spans tryptophan 49 to serine 190. The interval serine 50–proline 181 is interaction with PIK3C3. Phosphoserine is present on serine 198. The tract at residues serine 205–alanine 437 is interaction with YWHAB. Low complexity predominate over residues serine 233 to histidine 242. The tract at residues serine 233–glycine 423 is disordered. Serine 250 and serine 268 each carry phosphoserine. A compositionally biased stretch (polar residues) spans alanine 270–aspartate 319. The interaction with UVRAG stretch occupies residues threonine 302–arginine 585. Low complexity predominate over residues alanine 339–leucine 371. A compositionally biased stretch (polar residues) spans glutamine 379–glutamine 395. Phosphoserine is present on residues serine 390, serine 412, serine 513, and serine 547. The interaction with BECN1 stretch occupies residues alanine 490–glutamate 542. The segment covering serine 547 to serine 566 has biased composition (low complexity). Residues serine 547–isoleucine 579 are disordered. The tract at residues serine 552–serine 609 is interaction with CYBA. The segment covering serine 570 to isoleucine 579 has biased composition (acidic residues). Phosphoserine is present on serine 655. An interaction with CARD9 region spans residues proline 656–serine 744. The segment at cysteine 705–threonine 956 is interaction with Rab7.

Associates with PI3K (PI3KC3/PI3K-III/class III phosphatidylinositol 3-kinase) complex II (PI3KC3-C2) in which the core composed of the catalytic subunit PIK3C3, the regulatory subunit PIK3R4 and BECN1 is associated with UVRAG; in the complex interacts directly with PI3KC3 and UVRAG. Interacts with Rab7 (RAB7A or RAB7B) (GTP-bound form); Rab7 and UVRAG compete for RUBCN binding; can interact simultaneously with Rab7 and the PI3K complex. Interacts with CYBA and CYBB; indicative for the association with the CYBA:CYBB NADPH oxidase heterodimer. Interacts with NOX4 and probably associates with the CYBA:NOX4 complex. Interacts with YWHAB and CARD9 in a competitive and stimulation-dependent manner; RUBCN exchanges interaction from YWHAB to CARD9 upon stimulation with beta-1,3-glucan.

It localises to the late endosome. The protein resides in the lysosome. Its subcellular location is the early endosome. Functionally, inhibits PIK3C3 activity; under basal conditions negatively regulates PI3K complex II (PI3KC3-C2) function in autophagy. Negatively regulates endosome maturation and degradative endocytic trafficking and impairs autophagosome maturation process. Can sequester UVRAG from association with a class C Vps complex (possibly the HOPS complex) and negatively regulates Rab7 activation. Involved in regulation of pathogen-specific host defense of activated macrophages. Following bacterial infection promotes NADH oxidase activity by association with CYBA thereby affecting TLR2 signaling and probably other TLR-NOX pathways. Stabilizes the CYBA:CYBB NADPH oxidase heterodimer, increases its association with TLR2 and its phagosome trafficking to induce antimicrobial burst of ROS and production of inflammatory cytokines. Following fungal or viral infection (implicating CLEC7A (dectin-1)-mediated myeloid cell activation or RIGI-dependent sensing of RNA viruses) negatively regulates pro-inflammatory cytokine production by association with CARD9 and sequestering it from signaling complexes. This is Run domain Beclin-1-interacting and cysteine-rich domain-containing protein from Mus musculus (Mouse).